A 372-amino-acid polypeptide reads, in one-letter code: N-methyl-L-tryptophan oxidase (372 aa).

4–34 lines the FAD pocket; it reads DLIIIGSGSVGAAAGYYATRAGLKVLMTDAH. Residue C307 is modified to S-8alpha-FAD cysteine.

This sequence belongs to the MSOX/MTOX family. MTOX subfamily. As to quaternary structure, monomer. FAD serves as cofactor.

The catalysed reaction is N(alpha)-methyl-L-tryptophan + O2 + H2O = L-tryptophan + formaldehyde + H2O2. Catalyzes the oxidative demethylation of N-methyl-L-tryptophan. The polypeptide is N-methyl-L-tryptophan oxidase (Salmonella typhimurium (strain LT2 / SGSC1412 / ATCC 700720)).